The chain runs to 159 residues: Phosphopantetheine adenylyltransferase (159 aa).

T10 is a binding site for substrate. ATP is bound by residues T10–F11 and H18. Positions 42, 74, and 88 each coordinate substrate. ATP contacts are provided by residues G89 to R91, E99, and W124 to S130.

It belongs to the bacterial CoaD family. As to quaternary structure, homohexamer. Mg(2+) is required as a cofactor.

The protein localises to the cytoplasm. It catalyses the reaction (R)-4'-phosphopantetheine + ATP + H(+) = 3'-dephospho-CoA + diphosphate. It participates in cofactor biosynthesis; coenzyme A biosynthesis; CoA from (R)-pantothenate: step 4/5. Its function is as follows. Reversibly transfers an adenylyl group from ATP to 4'-phosphopantetheine, yielding dephospho-CoA (dPCoA) and pyrophosphate. In Salmonella typhimurium (strain LT2 / SGSC1412 / ATCC 700720), this protein is Phosphopantetheine adenylyltransferase.